The primary structure comprises 670 residues: DNA ligase (670 aa).

NAD(+) contacts are provided by residues 36 to 40 (DEEYD), 84 to 85 (SL), and glutamate 116. Lysine 118 (N6-AMP-lysine intermediate) is an active-site residue. Residues arginine 139, glutamate 177, lysine 293, and lysine 317 each coordinate NAD(+). Zn(2+) contacts are provided by cysteine 411, cysteine 414, cysteine 429, and cysteine 434. Residues 594–670 (KKPSPLKGLT…SYEEFLKMLE (77 aa)) form the BRCT domain.

It belongs to the NAD-dependent DNA ligase family. LigA subfamily. It depends on Mg(2+) as a cofactor. Mn(2+) serves as cofactor.

The enzyme catalyses NAD(+) + (deoxyribonucleotide)n-3'-hydroxyl + 5'-phospho-(deoxyribonucleotide)m = (deoxyribonucleotide)n+m + AMP + beta-nicotinamide D-nucleotide.. Its function is as follows. DNA ligase that catalyzes the formation of phosphodiester linkages between 5'-phosphoryl and 3'-hydroxyl groups in double-stranded DNA using NAD as a coenzyme and as the energy source for the reaction. It is essential for DNA replication and repair of damaged DNA. This chain is DNA ligase, found in Thermodesulfovibrio yellowstonii (strain ATCC 51303 / DSM 11347 / YP87).